The sequence spans 61 residues: Large ribosomal subunit protein eL24 (61 aa).

4 residues coordinate Zn(2+): Cys7, Cys10, Cys33, and Cys37. The segment at 7–37 adopts a C4-type zinc-finger fold; that stretch reads CSFCGHEIPPGTGLMYVRNDGTMLWFCSSKC.

It belongs to the eukaryotic ribosomal protein eL24 family. In terms of assembly, part of the 50S ribosomal subunit. Forms a cluster with proteins L3 and L14. The cofactor is Zn(2+).

Functionally, binds to the 23S rRNA. In Saccharolobus islandicus (strain M.16.27) (Sulfolobus islandicus), this protein is Large ribosomal subunit protein eL24.